The chain runs to 345 residues: NADH-quinone oxidoreductase subunit H (345 aa).

8 consecutive transmembrane segments (helical) span residues 15-35, 82-102, 115-135, 161-181, 190-210, 240-262, 278-298, and 309-329; these read MLLQGLAVIAFVMGSLIFMVY, FVYFLAPFLSMMLALFAFVVI, VGILFIFAASSLEVYGVIMGG, LGLIIIGIIISTGSMNLTAIV, LLNWYWLPHLPMVVLFFVSAL, YLLFMAGEYIAMYLMCALLSLLF, WWMVIKMWFWFYMFAMVKAIV, and IGWKVFLPLSLGWVVLVAILA.

The protein belongs to the complex I subunit 1 family. In terms of assembly, NDH-1 is composed of at least 14 different subunits, Nqo1 to Nqo14. The complex has a L-shaped structure, with the hydrophobic arm (subunits Nqo7, Nqo8, Nqo10 to Nqo14) embedded in the inner membrane and the hydrophilic peripheral arm (subunits Nqo1 to Nqo6, Nqo9) protruding into the bacterial cytoplasm. The hydrophilic domain contains all the redox centers. NADH-quinone oxidoreductase forms a supercomplex with ubiquinol-cytochrome c reductase complex (complex III or cytochrome b-c1 complex) and cytochrome c oxidase (complex IV), which stabilizes the NADH-quinone oxidoreductase complex.

The protein localises to the cell inner membrane. The catalysed reaction is a quinone + NADH + 5 H(+)(in) = a quinol + NAD(+) + 4 H(+)(out). Functionally, NDH-1 shuttles electrons from NADH, via FMN and iron-sulfur (Fe-S) centers, to quinones in the respiratory chain. The immediate electron acceptor for the enzyme in this species is believed to be ubiquinone. Couples the redox reaction to proton translocation (for every two electrons transferred, four hydrogen ions are translocated across the cytoplasmic membrane), and thus conserves the redox energy in a proton gradient. This subunit may bind ubiquinone. The protein is NADH-quinone oxidoreductase subunit H of Paracoccus denitrificans (strain Pd 1222).